The following is a 531-amino-acid chain: MAPTIQTQAQREDGHRPNSHRTLPERSGVVCRVKYCNSLPDIPFDPKFITYPFDQNRFVQYKATSLEKQHKHDLLTEPDLGVTIDLINPDTYRIDPNVLLDPADEKLLEEEIQAPTSSKRSQQHAKVVPWMRKTEYISTEFNRYGISNEKPEVKIGVSVKQQFTEEEIYKDRDSQITAIEKTFEDAQKSISQHYSKPRVTPVEVMPVFPDFKMWINPCAQVIFDSDPAPKDTSGAAALEMMSQAMIRGMMDEEGNQFVAYFLPVEETLKKRKRDQEEEMDYAPDDVYDYKIAREYNWNVKNKASKGYEENYFFIFREGDGVYYNELETRVRLSKRRAKAGVQSGTNALLVVKHRDMNEKELEAQEARKAQLENHEPEEEEEEEMETEEKEAGGSDEEQEKGSSSEKEGSEDEHSGSESEREEGDRDEASDKSGSGEDESSEDEARAARDKEEIFGSDADSEDDADSDDEDRGQAQGGSDNDSDSGSNGGGQRSRSHSRSASPFPSGSEHSAQEDGSEAAASDSSEADSDSD.

The segment at M1–L23 is disordered. The residue at position 117 (S117) is a Phosphoserine. Residues K133 and K154 each participate in a glycyl lysine isopeptide (Lys-Gly) (interchain with G-Cter in SUMO2) cross-link. Positions K150–K300 are interaction with PINT87aa. Residues K352 to K400 adopt a coiled-coil conformation. Basic and acidic residues predominate over residues L361–H374. The segment at L361–D531 is disordered. Over residues E375–Q398 the composition is skewed to acidic residues. Basic and acidic residues-rich tracts occupy residues E399–S434 and D442–I453. Position 456 is a phosphoserine (S456). The segment covering A458–D470 has biased composition (acidic residues). 2 stretches are compositionally biased toward low complexity: residues G476–G485 and R498–S507.

The protein belongs to the PAF1 family. As to quaternary structure, component of the PAF1 complex, which consists of CDC73, PAF1, LEO1, CTR9, RTF1 and SKIC8. The PAF1 complex interacts with PHF5A. Interacts with POLR2A, TCEA1, SKIC3, KMT2A/MLL1, SUPT5H, RNF20 and RNF40. Interacts with UBE2E1. Interacts with PINT87aa which is encoded by the circular form of the long non-coding RNA LINC-PINT; the interaction enhances the binding of the PAF1 complex to target gene promoters and may anchor the complex on target gene promoters, sequentially pausing RNA polymerase II-induced mRNA elongation. In terms of assembly, (Microbial infection) Interacts with influenza A strain H3N2 NS1 protein; the interaction interferes with host cell gene transcription, specifically with that of antiviral genes. (Microbial infection) The PAF1 complex interacts with Zika virus French Polynesia 10087PF/2013 non-structural protein 5/NS5. The interaction with viral NS5 proteins may reduce the antiviral immune response by inhibiting the recruitment of the PAF1 complex to interferon-stimulated genes, thus preventing their transcription. As to quaternary structure, (Microbial infection) The PAF1 complex interacts with Dengue virus DENV2 16681 non-structural protein 5/NS5. The PAF1 complex interacts with Dengue virus DENV4 Dominica/814669/1981 non-structural protein 5/NS5. The interaction with viral NS5 proteins may reduce the antiviral immune response by inhibiting the recruitment of the PAF1 complex to interferon-stimulated genes, thus preventing their transcription.

The protein localises to the nucleus. Its function is as follows. Component of the PAF1 complex (PAF1C) which has multiple functions during transcription by RNA polymerase II and is implicated in regulation of development and maintenance of embryonic stem cell pluripotency. PAF1C associates with RNA polymerase II through interaction with POLR2A CTD non-phosphorylated and 'Ser-2'- and 'Ser-5'-phosphorylated forms and is involved in transcriptional elongation, acting both independently and synergistically with TCEA1 and in cooperation with the DSIF complex and HTATSF1. PAF1C is required for transcription of Hox and Wnt target genes. PAF1C is involved in hematopoiesis and stimulates transcriptional activity of KMT2A/MLL1; it promotes leukemogenesis through association with KMT2A/MLL1-rearranged oncoproteins, such as KMT2A/MLL1-MLLT3/AF9 and KMT2A/MLL1-MLLT1/ENL. PAF1C is involved in histone modifications such as ubiquitination of histone H2B and methylation on histone H3 'Lys-4' (H3K4me3). PAF1C recruits the RNF20/40 E3 ubiquitin-protein ligase complex and the E2 enzyme UBE2A or UBE2B to chromatin which mediate monoubiquitination of 'Lys-120' of histone H2B (H2BK120ub1); UB2A/B-mediated H2B ubiquitination is proposed to be coupled to transcription. PAF1C is involved in mRNA 3' end formation probably through association with cleavage and poly(A) factors. In case of infection by influenza A strain H3N2, PAF1C associates with viral NS1 protein, thereby regulating gene transcription. Connects PAF1C with the RNF20/40 E3 ubiquitin-protein ligase complex. Involved in polyadenylation of mRNA precursors. Has oncogenic activity in vivo and in vitro. In Homo sapiens (Human), this protein is RNA polymerase II-associated factor 1 homolog (PAF1).